The chain runs to 691 residues: Serotransferrin-2 (691 aa).

An N-terminal signal peptide occupies residues Met-1 to Ala-18. Transferrin-like domains are found at residues Val-25–Lys-329 and Ile-340–Lys-670. Cys-28 and Cys-50 are joined by a disulfide. The Fe(3+) site is built by Asp-74 and Tyr-104. 3 cysteine pairs are disulfide-bonded: Cys-127–Cys-207, Cys-172–Cys-186, and Cys-235–Cys-249. Residues Thr-129, Ser-134, Gly-136, and Trp-137 each coordinate hydrogencarbonate. N-linked (GlcNAc...) asparagine glycosylation occurs at Asn-169. Tyr-201 provides a ligand contact to Fe(3+). His-257 is a binding site for Fe(3+). Intrachain disulfides connect Cys-343–Cys-379 and Cys-353–Cys-370. Residues Asp-394 and Tyr-428 each contribute to the Fe(3+) site. Intrachain disulfides connect Cys-404–Cys-682, Cys-419–Cys-643, Cys-451–Cys-530, Cys-475–Cys-671, Cys-485–Cys-499, Cys-496–Cys-513, and Cys-570–Cys-584. The hydrogencarbonate site is built by Thr-453, Arg-457, Ala-459, and Gly-460. Residue Tyr-524 participates in Fe(3+) binding. Fe(3+) is bound at residue His-592.

It belongs to the transferrin family. In terms of assembly, monomer. Abundant in liver and serum with smaller amounts found in the stomach and kidney.

It is found in the secreted. In terms of biological role, transferrins are iron binding transport proteins which can bind two Fe(3+) ions in association with the binding of an anion, usually bicarbonate. It is responsible for the transport of iron from sites of absorption and heme degradation to those of storage and utilization. Serum transferrin may also have a further role in stimulating cell proliferation. The protein is Serotransferrin-2 (tf2) of Salmo salar (Atlantic salmon).